The sequence spans 199 residues: Imidazole glycerol phosphate synthase subunit HisH (199 aa).

A Glutamine amidotransferase type-1 domain is found at 3-199 (NITIIDTGCA…LKNFVEKVPF (197 aa)). Cys78 functions as the Nucleophile in the catalytic mechanism. Active-site residues include His178 and Glu180.

In terms of assembly, heterodimer of HisH and HisF.

It localises to the cytoplasm. The enzyme catalyses 5-[(5-phospho-1-deoxy-D-ribulos-1-ylimino)methylamino]-1-(5-phospho-beta-D-ribosyl)imidazole-4-carboxamide + L-glutamine = D-erythro-1-(imidazol-4-yl)glycerol 3-phosphate + 5-amino-1-(5-phospho-beta-D-ribosyl)imidazole-4-carboxamide + L-glutamate + H(+). The catalysed reaction is L-glutamine + H2O = L-glutamate + NH4(+). It participates in amino-acid biosynthesis; L-histidine biosynthesis; L-histidine from 5-phospho-alpha-D-ribose 1-diphosphate: step 5/9. In terms of biological role, IGPS catalyzes the conversion of PRFAR and glutamine to IGP, AICAR and glutamate. The HisH subunit catalyzes the hydrolysis of glutamine to glutamate and ammonia as part of the synthesis of IGP and AICAR. The resulting ammonia molecule is channeled to the active site of HisF. This chain is Imidazole glycerol phosphate synthase subunit HisH, found in Haemophilus influenzae (strain 86-028NP).